A 362-amino-acid chain; its full sequence is Prostaglandin F2-alpha receptor (362 aa).

Topologically, residues 1-31 (MSTNNSVQPVSPASELLSNTTCQLEEDLSIS) are extracellular. Residues asparagine 4 and asparagine 19 are each glycosylated (N-linked (GlcNAc...) asparagine). The helical transmembrane segment at 32–54 (FSIIFMTVGILSNSLAIAILMKA) threads the bilayer. Topologically, residues 55-69 (YQRFRQKYKSSFLLL) are cytoplasmic. The helical transmembrane segment at 70 to 90 (ASALVITDFFGHLINGTIAVF) threads the bilayer. The Extracellular portion of the chain corresponds to 91-109 (VYASDKDWIYFDKSNILCS). Cysteines 108 and 186 form a disulfide. Residues 110 to 131 (IFGICMVFSGLCPLFLGSLMAI) traverse the membrane as a helical segment. Residues 132 to 152 (ERCIGVTKPIFHSTKITTKHV) lie on the Cytoplasmic side of the membrane. A helical transmembrane segment spans residues 153 to 175 (KMMLSGVCFFAVFVALLPILGHR). Residues 176 to 198 (DYKIQASRTWCFYKTDQIKDWED) are Extracellular-facing. Residues 199-224 (RFYLLLFAFLGLLALGISFVCNAITG) form a helical membrane-spanning segment. Residues 225 to 250 (ISLLKVKFRSQQHRQGRSHHFEMVIQ) lie on the Cytoplasmic side of the membrane. Residues 251–267 (LLGIMCVSCICWSPFLV) traverse the membrane as a helical segment. Topologically, residues 268–285 (TMASIGMNIQDFKDSCER) are extracellular. A helical membrane pass occupies residues 286 to 307 (TLFTLRMATWNQILDPWVYILL). Residues 308-362 (RKAVLRNLYVCTRRCCGVHVISLHVWELSSIKNSLKVAAISDLPVTEKVTQQTST) are Cytoplasmic-facing.

Belongs to the G-protein coupled receptor 1 family.

The protein localises to the cell membrane. Its function is as follows. Receptor for prostaglandin F2-alpha (PGF2-alpha). The activity of this receptor is mediated by G proteins which activate a phosphatidylinositol-calcium second messenger system. Initiates luteolysis in the corpus luteum. The protein is Prostaglandin F2-alpha receptor (PTGFR) of Ovis aries (Sheep).